Here is a 325-residue protein sequence, read N- to C-terminus: Sulfite dehydrogenase subunit C (325 aa).

Transmembrane regions (helical) follow at residues 5-25 (FSVIFLTTLLGAGQGLYLAMV), 43-63 (FYAVGSLVALLLLIAGLGASF), 87-107 (EVIVLPIVMALVFAYGVAHWF), 126-146 (LLLGVLGTIASLALFVCTAMI), 165-185 (FLFLGAASGFMLAAAYSAYIG), 186-206 (NPLVTFYGTWAVILTLVGLAS), 266-286 (VYLVLVFPIPVLLIGLSYLIG), and 290-310 (LPIIAFFVQFAGLLIERWSFF).

The protein belongs to the DmsC family. In terms of assembly, forms a heterotrimeric membrane-bound complex composed of a catalytic heterodimer (SoeAB) and a membrane anchor protein (SoeC).

It is found in the cell inner membrane. Its function is as follows. Part of the SoeABC complex that catalyzes the oxidation of sulfite to sulfate. SoeC probably anchors and stabilizes the catalytic subunits. This is Sulfite dehydrogenase subunit C from Allochromatium vinosum (strain ATCC 17899 / DSM 180 / NBRC 103801 / NCIMB 10441 / D) (Chromatium vinosum).